A 466-amino-acid polypeptide reads, in one-letter code: Muscarinic acetylcholine receptor M2 (466 aa).

Residues 1–22 (MNNSTNSSNNGLAITSPYKTFE) lie on the Extracellular side of the membrane. 3 N-linked (GlcNAc...) asparagine glycosylation sites follow: Asn2, Asn3, and Asn6. Residues 23-45 (VVFIVLVAGSLSLVTIIGNILVM) form a helical membrane-spanning segment. At 46 to 59 (VSIKVNRHLQTVNN) the chain is on the cytoplasmic side. A helical membrane pass occupies residues 60-80 (YFLFSLACADLIIGVFSMNLY). At 81 to 97 (TLYTVIGYWPLGPVVCD) the chain is on the extracellular side. Residues Cys96 and Cys176 are joined by a disulfide bond. Residues 98-119 (LWLALDYVVSNASVMNLLIISF) traverse the membrane as a helical segment. The Important for signaling signature appears at 120-122 (DRY). At 120-139 (DRYFCVTKPLTYPVKRTTKM) the chain is on the cytoplasmic side. The helical transmembrane segment at 140–162 (AGMMIAAAWVLSFILWAPAILFW) threads the bilayer. Topologically, residues 163–184 (QFIVGVRTVEDGECYIQFFSNA) are extracellular. Residues 185 to 209 (AVTFGTAIAAFYLPVIIMTVLYWHI) traverse the membrane as a helical segment. The Cytoplasmic segment spans residues 210 to 387 (SRASKSRIKK…PPSREKKVTR (178 aa)). Positions 218–320 (KKEKKEPVAN…SLGHSKDDNS (103 aa)) are disordered. Position 232 is a phosphoserine (Ser232). A compositionally biased stretch (basic and acidic residues) spans 254–270 (GLEHNKIQNGKAPRDGG). 2 stretches are compositionally biased toward polar residues: residues 284–293 (NDSTSVSAVA) and 304–313 (DENTVSTSLG). The chain crosses the membrane as a helical span at residues 388–410 (TILAILLAFIITWAPYNVMVLIN). Topologically, residues 411–418 (TFCAPCIP) are extracellular. Cysteines 413 and 416 form a disulfide. A helical transmembrane segment spans residues 419–442 (NTVWTIGYWLCYINSTINPACYAL). Residues 436–440 (NPACY) carry the Important for signaling motif. The Cytoplasmic segment spans residues 443–466 (CNATFKKTFKHLLMCHYKNIGATR). Thr446, Thr450, and Thr465 each carry phosphothreonine.

The protein belongs to the G-protein coupled receptor 1 family. Muscarinic acetylcholine receptor subfamily. CHRM2 sub-subfamily. As to quaternary structure, interacts with ARRB1 and ARRB2. Interacts with RACK1; the interaction regulates CHRM2 internalization. In terms of processing, phosphorylated in response to agonist treatment.

Its subcellular location is the cell membrane. The protein resides in the postsynaptic cell membrane. Its function is as follows. The muscarinic acetylcholine receptor mediates various cellular responses, including inhibition of adenylate cyclase, breakdown of phosphoinositides and modulation of potassium channels through the action of G proteins. Primary transducing effect is adenylate cyclase inhibition. Signaling promotes phospholipase C activity, leading to the release of inositol trisphosphate (IP3); this then triggers calcium ion release into the cytosol. This Mus musculus (Mouse) protein is Muscarinic acetylcholine receptor M2 (Chrm2).